A 219-amino-acid polypeptide reads, in one-letter code: Transcription factor MYB23 (219 aa).

HTH myb-type domains lie at 9–61 (EHEY…MNYL) and 62–116 (SPNV…SKKL). 2 consecutive DNA-binding regions (H-T-H motif) follow at residues 37–61 (WNRI…MNYL) and 89–112 (WSLI…NTHL).

Interacts with BHLH2/EGL3/MYC146, BHLH12/MYC1 and GL3. In terms of tissue distribution, expressed in roots, seed coats, leaves, stems and flowers. Detected specifically in trichomes, and in the cell division and differentiation zone of the root.

Its subcellular location is the nucleus. Functionally, transcription activator, when associated with BHLH2/EGL3/MYC146 or BHLH12/MYC1. Regulates the epidermal cell fate specification. Mediates the formation of columellae and accumulation of mucilages on seed coats. Controls the elongation of epidermal cells positively in roots but negatively in stems, leading to the promotion of primary roots elongation and repression of leaves and stems elongation, respectively. Ovoids ectopic root-hair formation, probably by inducing GL2 in roots. Controls trichome initiation and branching. The protein is Transcription factor MYB23 (MYB23) of Arabidopsis thaliana (Mouse-ear cress).